We begin with the raw amino-acid sequence, 138 residues long: Gene 64 protein (138 aa).

This is Gene 64 protein (64) from Mycobacterium (Mycobacteriophage D29).